A 368-amino-acid polypeptide reads, in one-letter code: MYKLFFRLVFKRMDPEQAHYLAFRWIRLAARIPVLRTFVAAALAPRFKELRTEAFGLRMHGPFGLAAGFDKNAVAVDGMSMLGFDHVEIGTVTGEPQPGNPKKRLFRLVPDRALINRMGFNNEGSAAVAARLAAREAVFRTVVGVNIGKTKVVPEEEAADDYVKSTERLARHADYLVVNVSSPNTPGLRNLQATEALRPLLSAVREAADRTVTERRVPLLVKIAPDLADDDIDAVADLAVELGLDGIIATNTTIAREGLGLKSEPTLVKETGGLSGAPLKARSLEVLSRLYARVGDRITLVGVGGIENAEDAWQRILAGATLVQGYSAFIYEGPFWGRAIHKGLAARLRTSPYATLADAVGADVRKSA.

FMN is bound by residues 67-71 and T91; that span reads AGFDK. Position 71 (K71) interacts with substrate. 116 to 120 contacts substrate; that stretch reads NRMGF. Positions 146 and 179 each coordinate FMN. Residue N179 participates in substrate binding. Residue S182 is the Nucleophile of the active site. N184 provides a ligand contact to substrate. The FMN site is built by K222 and T250. 251-252 contacts substrate; sequence NT. FMN contacts are provided by residues G276, G305, and 326–327; that span reads YS.

Belongs to the dihydroorotate dehydrogenase family. Type 2 subfamily. In terms of assembly, monomer. Requires FMN as cofactor.

Its subcellular location is the cell membrane. The catalysed reaction is (S)-dihydroorotate + a quinone = orotate + a quinol. It participates in pyrimidine metabolism; UMP biosynthesis via de novo pathway; orotate from (S)-dihydroorotate (quinone route): step 1/1. Functionally, catalyzes the conversion of dihydroorotate to orotate with quinone as electron acceptor. The polypeptide is Dihydroorotate dehydrogenase (quinone) (Streptomyces avermitilis (strain ATCC 31267 / DSM 46492 / JCM 5070 / NBRC 14893 / NCIMB 12804 / NRRL 8165 / MA-4680)).